A 257-amino-acid chain; its full sequence is Tryptophan synthase alpha chain (257 aa).

Catalysis depends on proton acceptor residues E51 and D62.

Belongs to the TrpA family. Tetramer of two alpha and two beta chains.

It carries out the reaction (1S,2R)-1-C-(indol-3-yl)glycerol 3-phosphate + L-serine = D-glyceraldehyde 3-phosphate + L-tryptophan + H2O. It participates in amino-acid biosynthesis; L-tryptophan biosynthesis; L-tryptophan from chorismate: step 5/5. The alpha subunit is responsible for the aldol cleavage of indoleglycerol phosphate to indole and glyceraldehyde 3-phosphate. This Nitratidesulfovibrio vulgaris (strain DP4) (Desulfovibrio vulgaris) protein is Tryptophan synthase alpha chain.